A 139-amino-acid polypeptide reads, in one-letter code: Large ribosomal subunit protein uL16 (139 aa).

Basic residues predominate over residues 1-21 (MLSPRKTKFRKQHRGRMRGKA). The disordered stretch occupies residues 1–23 (MLSPRKTKFRKQHRGRMRGKATR).

It belongs to the universal ribosomal protein uL16 family. In terms of assembly, part of the 50S ribosomal subunit.

In terms of biological role, binds 23S rRNA and is also seen to make contacts with the A and possibly P site tRNAs. The chain is Large ribosomal subunit protein uL16 from Acaryochloris marina (strain MBIC 11017).